A 152-amino-acid chain; its full sequence is Large ribosomal subunit protein bL9 (152 aa).

This sequence belongs to the bacterial ribosomal protein bL9 family.

In terms of biological role, binds to the 23S rRNA. The polypeptide is Large ribosomal subunit protein bL9 (Rippkaea orientalis (strain PCC 8801 / RF-1) (Cyanothece sp. (strain PCC 8801))).